Here is a 488-residue protein sequence, read N- to C-terminus: (S)-N-methylcoclaurine 3'-hydroxylase isozyme 2 (488 aa).

The helical transmembrane segment at 3 to 23 threads the bilayer; that stretch reads VVTVALIAVIISSILYLLFGS. Cysteine 430 is a heme binding site.

This sequence belongs to the cytochrome P450 family. Heme is required as a cofactor.

Its subcellular location is the endoplasmic reticulum membrane. It is found in the microsome membrane. The catalysed reaction is (S)-N-methylcoclaurine + reduced [NADPH--hemoprotein reductase] + O2 = (S)-3'-hydroxy-N-methylcoclaurine + oxidized [NADPH--hemoprotein reductase] + H2O + H(+). It functions in the pathway alkaloid biosynthesis; (S)-reticuline biosynthesis; (S)-reticuline from (S)-norcoclaurine: step 3/4. In terms of biological role, 3'-hydroxylation of (S)-N-methylcoclaurine. The sequence is that of (S)-N-methylcoclaurine 3'-hydroxylase isozyme 2 (CYP80B2) from Eschscholzia californica (California poppy).